The sequence spans 199 residues: uncharacterized protein (199 aa).

A coiled-coil region spans residues 72 to 116 (EIYSEIENEESDIEEMSEEMKAFFAKTQEHRQKLKEQRAAEKRKE). A compositionally biased stretch (basic and acidic residues) spans 98–117 (TQEHRQKLKEQRAAEKRKEG). The disordered stretch occupies residues 98–127 (TQEHRQKLKEQRAAEKRKEGQSSSKSQEEY).

This is an uncharacterized protein from Caenorhabditis elegans.